The sequence spans 431 residues: Adenylosuccinate synthetase (431 aa).

Residues 12 to 18 and 40 to 42 contribute to the GTP site; these read GDEGKGK and GHT. Residue D13 is the Proton acceptor of the active site. Mg(2+) contacts are provided by D13 and G40. IMP-binding positions include 13 to 16, 38 to 41, T129, R143, Q224, T239, and R303; these read DEGK and NAGH. H41 functions as the Proton donor in the catalytic mechanism. Position 299–305 (299–305) interacts with substrate; it reads TVSNRQR. GTP-binding positions include R305, 331–333, and 413–415; these read KLD and STG.

It belongs to the adenylosuccinate synthetase family. In terms of assembly, homodimer. It depends on Mg(2+) as a cofactor.

It localises to the cytoplasm. The catalysed reaction is IMP + L-aspartate + GTP = N(6)-(1,2-dicarboxyethyl)-AMP + GDP + phosphate + 2 H(+). It functions in the pathway purine metabolism; AMP biosynthesis via de novo pathway; AMP from IMP: step 1/2. In terms of biological role, plays an important role in the de novo pathway of purine nucleotide biosynthesis. Catalyzes the first committed step in the biosynthesis of AMP from IMP. This chain is Adenylosuccinate synthetase, found in Ehrlichia canis (strain Jake).